Here is a 537-residue protein sequence, read N- to C-terminus: 5,6-dihydroxyindole-2-carboxylic acid oxidase (537 aa).

The first 24 residues, 1–24 (MKSYNVLPLAYISLFLMLFYQVWA), serve as a signal peptide directing secretion. Residues 25-477 (QFPRECANIE…WPGQEFTVSE (453 aa)) are Lumenal, melanosome-facing. 5 disulfide bridges follow: C30-C41, C42-C65, C56-C99, C101-C110, and C113-C122. 2 N-linked (GlcNAc...) asparagine glycosylation sites follow: N96 and N104. Residue N181 is glycosylated (N-linked (GlcNAc...) asparagine). Zn(2+)-binding residues include H192, H215, and H224. 2 disulfide bridges follow: C258/C261 and C290/C303. Residues N304 and N350 are each glycosylated (N-linked (GlcNAc...) asparagine). Zn(2+) contacts are provided by H377 and H381. N385 carries N-linked (GlcNAc...) asparagine glycosylation. Position 404 (H404) interacts with Zn(2+). The chain crosses the membrane as a helical span at residues 478 to 501 (IITIAVVAALLLVAAIFGVASCLI). The Cytoplasmic portion of the chain corresponds to 502–537 (RSRSTKNEANQPLLTDHYQRYAEDYEELPNPNHSMV).

This sequence belongs to the tyrosinase family. In terms of assembly, monomer. Interacts with ATP7A. Interacts with SLC45A2. It depends on Cu(2+) as a cofactor. Zn(2+) is required as a cofactor. In terms of processing, glycosylated. In terms of tissue distribution, pigment cells.

The protein resides in the melanosome membrane. The catalysed reaction is 2 5,6-dihydroxyindole-2-carboxylate + O2 = 2 indole-5,6-quinone-2-carboxylate + 2 H2O. It participates in pigment biosynthesis; melanin biosynthesis. In terms of biological role, plays a role in melanin biosynthesis. Catalyzes the oxidation of 5,6-dihydroxyindole-2-carboxylic acid (DHICA) into indole-5,6-quinone-2-carboxylic acid. May regulate or influence the type of melanin synthesized. Also to a lower extent, capable of hydroxylating tyrosine and producing melanin. The chain is 5,6-dihydroxyindole-2-carboxylic acid oxidase (Tyrp1) from Mus musculus (Mouse).